A 171-amino-acid chain; its full sequence is MDQFIKQDETGDLIETGMNVANHFLSAPIQGTNSLSKATIIPGVAPVLIGNPEQKNIQYPTASHQGSKSKGRGSGAKPIIVSSSEGGTGGTQIPEPLFAQTGQGGVVTTVYQDPTIQPTGSYRSVELAKIGKERMINRFVEKPRTSTPVTEFKRGGGRERLPKARQSKRRA.

Disordered stretches follow at residues 57–100 (IQYP…LFAQ) and 143–171 (PRTSTPVTEFKRGGGRERLPKARQSKRRA). Residues 151 to 162 (EFKRGGGRERLP) show a composition bias toward basic and acidic residues.

Belongs to the Orthorubulavirus I protein family.

In Mumps virus genotype N (strain L-Zagreb vaccine) (MuV), this protein is I.